We begin with the raw amino-acid sequence, 620 residues long: Eukaryotic translation initiation factor 2-alpha kinase 1 (620 aa).

The tract at residues 1-38 is disordered; sequence MLGGGSVDGERDTDDDAAGAVAAPPAIDFPAEVSDPKY. The span at 18 to 28 shows a compositional bias: low complexity; that stretch reads AGAVAAPPAID. Positions 85 to 104 match the SIFI-degron motif; it reads LHSKQVFKLLCQTFIKMGLL. One can recognise a Protein kinase domain in the interval 167–581; it reads FEELAILGKG…ALQLLQSELF (415 aa). ATP contacts are provided by residues 173–181 and lysine 196; that span reads LGKGGYGRV. The residue at position 283 (threonine 283) is a Phosphothreonine. An HRM 1 repeat occupies 408–413; that stretch reads ACPYVM. Aspartate 440 (proton acceptor) is an active-site residue. A phosphothreonine; by autocatalysis mark is found at threonine 484 and threonine 486. Threonine 491 carries the phosphothreonine modification. The HRM 2 repeat unit spans residues 550 to 555; that stretch reads RCPVQA.

Belongs to the protein kinase superfamily. Ser/Thr protein kinase family. GCN2 subfamily. In terms of assembly, synthesized in an inactive form that binds to the N-terminal domain of CDC37. Has to be associated with a multiprotein complex containing Hsp90, CDC37 and PPP5C for maturation and activation by autophosphorylation. The phosphatase PPP5C modulates this activation. Homodimer; homodimerizes in presence of heme, forming a disulfide-linked inactive homodimer. Interacts with DELE1; binds both to full-length DELE1 and processed form of DELE1 (S-DELE1) in response to stress, leading to activate its protein kinase activity and trigger the integrated stress response (ISR). In terms of processing, activated by autophosphorylation; phosphorylated predominantly on serine and threonine residues, but also on tyrosine residues. Autophosphorylation at Thr-486 is required for kinase activation. The active autophosphorylated form apparently is largely refractory to cellular heme fluctuations. Post-translationally, ubiquitinated and degraded by the SIFI complex once the mitochondrial stress has been resolved, thereby providing stress response silencing. Within the SIFI complex, UBR4 initiates ubiquitin chain that are further elongated or branched by KCMF1.

It localises to the cytoplasm. It carries out the reaction L-seryl-[protein] + ATP = O-phospho-L-seryl-[protein] + ADP + H(+). It catalyses the reaction L-threonyl-[protein] + ATP = O-phospho-L-threonyl-[protein] + ADP + H(+). With respect to regulation, in normal conditions, the protein kinase activity is inhibited; inhibition is relieved by various stress conditions. Inhibited by heme: in presence of heme, forms a disulfide-linked inactive homodimer. Heme depletion relieves inhibition and stimulates kinase activity by autophosphorylation. Inhibited by the heme metabolites biliverdin and bilirubin. Induced by oxidative stress generated by arsenite treatment. Binding of nitric oxide (NO) to the heme iron in the N-terminal heme-binding domain activates the kinase activity, while binding of carbon monoxide (CO) suppresses kinase activity. Protein kinase activity is also activated upon binding to DELE1 in response to various stress, triggering the integrated stress response (ISR): activated by full-length DELE1 in response to iron deficiency, while it is activated by the processed form of DELE1 (S-DELE1) in response to mitochondrial stress. In terms of biological role, metabolic-stress sensing protein kinase that phosphorylates the alpha subunit of eukaryotic translation initiation factor 2 (EIF2S1/eIF-2-alpha) in response to various stress conditions. Key activator of the integrated stress response (ISR) required for adaptation to various stress, such as heme deficiency, oxidative stress, osmotic shock, mitochondrial dysfunction and heat shock. EIF2S1/eIF-2-alpha phosphorylation in response to stress converts EIF2S1/eIF-2-alpha in a global protein synthesis inhibitor, leading to a global attenuation of cap-dependent translation, while concomitantly initiating the preferential translation of ISR-specific mRNAs, such as the transcriptional activator ATF4, and hence allowing ATF4-mediated reprogramming. Acts as a key sensor of heme-deficiency: in normal conditions, binds hemin via a cysteine thiolate and histidine nitrogenous coordination, leading to inhibit the protein kinase activity. This binding occurs with moderate affinity, allowing it to sense the heme concentration within the cell: heme depletion relieves inhibition and stimulates kinase activity, activating the ISR. Thanks to this unique heme-sensing capacity, plays a crucial role to shut off protein synthesis during acute heme-deficient conditions. In red blood cells (RBCs), controls hemoglobin synthesis ensuring a coordinated regulation of the synthesis of its heme and globin moieties. It thereby plays an essential protective role for RBC survival in anemias of iron deficiency. Iron deficiency also triggers activation by full-length DELE1. Also activates the ISR in response to mitochondrial dysfunction: HRI/EIF2AK1 protein kinase activity is activated upon binding to the processed form of DELE1 (S-DELE1), thereby promoting the ATF4-mediated reprogramming. Also acts as an activator of mitophagy in response to mitochondrial damage: catalyzes phosphorylation of eIF-2-alpha (EIF2S1) following activation by S-DELE1, thereby promoting mitochondrial localization of EIF2S1, triggering PRKN-independent mitophagy. The chain is Eukaryotic translation initiation factor 2-alpha kinase 1 from Rattus norvegicus (Rat).